The following is a 931-amino-acid chain: Bifunctional glutamine synthetase adenylyltransferase/adenylyl-removing enzyme (931 aa).

The tract at residues 1–434 (MTLAPADLPV…STEFAALLAP (434 aa)) is adenylyl removase. The adenylyl transferase stretch occupies residues 441 to 931 (PDALANYWRS…ACRAAELPFA (491 aa)).

It belongs to the GlnE family. Mg(2+) is required as a cofactor.

It catalyses the reaction [glutamine synthetase]-O(4)-(5'-adenylyl)-L-tyrosine + phosphate = [glutamine synthetase]-L-tyrosine + ADP. It carries out the reaction [glutamine synthetase]-L-tyrosine + ATP = [glutamine synthetase]-O(4)-(5'-adenylyl)-L-tyrosine + diphosphate. In terms of biological role, involved in the regulation of glutamine synthetase GlnA, a key enzyme in the process to assimilate ammonia. When cellular nitrogen levels are high, the C-terminal adenylyl transferase (AT) inactivates GlnA by covalent transfer of an adenylyl group from ATP to specific tyrosine residue of GlnA, thus reducing its activity. Conversely, when nitrogen levels are low, the N-terminal adenylyl removase (AR) activates GlnA by removing the adenylyl group by phosphorolysis, increasing its activity. The regulatory region of GlnE binds the signal transduction protein PII (GlnB) which indicates the nitrogen status of the cell. This is Bifunctional glutamine synthetase adenylyltransferase/adenylyl-removing enzyme from Stenotrophomonas maltophilia (strain K279a).